A 134-amino-acid chain; its full sequence is Replication enhancer protein (134 aa).

The protein belongs to the geminiviridae replication enhancer protein family. In terms of assembly, homooligomer. Interacts with the replication-associated protein (REP). Interacts with host proliferating cell nuclear antigen (PCNA). Interacts with host retinoblastoma-related protein 1 (RBR1), and may thereby deregulate the host cell cycle. Oligomerization and interaction with PCNA are necessary for optimal replication enhancement.

In terms of biological role, increases viral DNA accumulation. Enhances infectivity and symptom expression. In Solanum lycopersicum (Tomato), this protein is Replication enhancer protein.